A 376-amino-acid chain; its full sequence is Chaperone protein DnaJ (376 aa).

The J domain maps to 5–70; it reads DFYEVLGVGR…DKKAAYDQFG (66 aa). The CR-type zinc finger occupies 132–210; sequence GLTKELRIPT…CHGEGRVEKS (79 aa). Positions 145, 148, 162, 165, 184, 187, 198, and 201 each coordinate Zn(2+). CXXCXGXG motif repeat units follow at residues 145 to 152, 162 to 169, 184 to 191, and 198 to 205; these read CDACDGSG, CGTCHGQG, CPTCHGRG, and CNKCHGEG.

Belongs to the DnaJ family. As to quaternary structure, homodimer. Zn(2+) is required as a cofactor.

The protein resides in the cytoplasm. Its function is as follows. Participates actively in the response to hyperosmotic and heat shock by preventing the aggregation of stress-denatured proteins and by disaggregating proteins, also in an autonomous, DnaK-independent fashion. Unfolded proteins bind initially to DnaJ; upon interaction with the DnaJ-bound protein, DnaK hydrolyzes its bound ATP, resulting in the formation of a stable complex. GrpE releases ADP from DnaK; ATP binding to DnaK triggers the release of the substrate protein, thus completing the reaction cycle. Several rounds of ATP-dependent interactions between DnaJ, DnaK and GrpE are required for fully efficient folding. Also involved, together with DnaK and GrpE, in the DNA replication of plasmids through activation of initiation proteins. In Shewanella halifaxensis (strain HAW-EB4), this protein is Chaperone protein DnaJ.